Reading from the N-terminus, the 220-residue chain is Ribonuclease HII (220 aa).

Residues 16–216 (PVFAGIDEAG…VRPNPAAEEQ (201 aa)) form the RNase H type-2 domain. 3 residues coordinate a divalent metal cation: D22, E23, and D114.

Belongs to the RNase HII family. Mn(2+) is required as a cofactor. The cofactor is Mg(2+).

It is found in the cytoplasm. It carries out the reaction Endonucleolytic cleavage to 5'-phosphomonoester.. Its function is as follows. Endonuclease that specifically degrades the RNA of RNA-DNA hybrids. The chain is Ribonuclease HII from Nitratidesulfovibrio vulgaris (strain ATCC 29579 / DSM 644 / CCUG 34227 / NCIMB 8303 / VKM B-1760 / Hildenborough) (Desulfovibrio vulgaris).